Here is a 735-residue protein sequence, read N- to C-terminus: MRRSFSVLGPYKWLKPSSTYTNVYCFVTNPPLISNPNNGSAIFRYLSYFAPQQRRQQQQAPDPDDPANLLKEDGVSLCSQMWLENFKEPDKTATNLTSYLRRFELWVLAYQKVCCDELGAYVPRSSIQRSALENLLALRNSVLDDRFKWGSRLDFYIKSPRDKTDYESLSKRKIKAILTTTQPTPFQDRIVQEVLLMILEPIYESRFSQKSFAFRPGRTAHTVLRVIRRNFAGYLWYVKGDLSVVLDGMKVGFVISSLMRDVRDKKVIDLIKSALVTPVVTSKVEDGEKKKTKKRKYQKKRVLAEDEPKPDPYWLETFFGFAPEEAGKSPQWGHCGILSPLLVNVCLDELDRWMETKVKDFYRPSKSDVIWNNPEGEADQGNTSWPEFVPTSGPDKTRKMDYVRYGGHILIGVRGPRADAATLRKELIEFVDQKYMLRLDNENLPIEHITKGIMFLDHVLCRRVVYPTLRYTATGGKIISEKGVGTLLSVTASLKQCIKQFRKLLFIKGDRDPDPQPCFRMFHATQAHTNNQMNKFLTTIAEWYRFADNRKKIVNFCSYIIRGSLAKLYAAKYKLRSRAKVYKFANRNLSLPLLQKKGQSPEYQNLLRMGLAESVDGLVYTRMSLVPETDYSPFPGNWRPEHEKFLIEYLTLDEPKTLEEQKRFIREKGLVSPQDYTSMLVWNYKRNAIPMDQVSILKDQPFLLGSSSTYNRDNDDQKNKEEDEDSEDGLRIARM.

A mitochondrion-targeting transit peptide spans 1–12 (MRRSFSVLGPYK). The 300-residue stretch at 161 to 460 (RDKTDYESLS…KGIMFLDHVL (300 aa)) folds into the Reverse transcriptase domain. The segment at 485 to 653 (GTLLSVTASL…KFLIEYLTLD (169 aa)) is intron maturase type-2. Positions 707 to 735 (SSTYNRDNDDQKNKEEDEDSEDGLRIARM) are disordered. A compositionally biased stretch (basic and acidic residues) spans 712–721 (RDNDDQKNKE).

Belongs to the plant nuclear intron maturase (nMat) family. As to quaternary structure, associated to a large ribonucleoprotein complex in mitochondria containing group-II intron RNAs.

The protein localises to the mitochondrion. In terms of biological role, nuclear-encoded maturase required for splicing of group-II introns in mitochondria. Involved in the splicing of mitochondrial COX2, NAD1 and NAD7 transcripts. Necessary for mitochondrial biogenesis during early developmental stages. The chain is Nuclear intron maturase 2, mitochondrial from Arabidopsis thaliana (Mouse-ear cress).